The sequence spans 220 residues: MTWSDILAEEKQKPYFKQILDFLACESAKGKVIFPTKENIFNAFKYTELDNLKVVILGQDPYHNYNQAHGLAFSVQKWVDIPPSLQNIYKELARSIPKFKTPNHGYLVDWAKQGVFLLNTTLTVEAHKANSHKDIGWETFTDTVINKISENKHNVVFMLWGSHARKKKVLIDSSRHLILESTHPSPLSAHRGFLGCNHFVDCNKYLIEKKDQKIDWNLLC.

Aspartate 60 functions as the Proton acceptor in the catalytic mechanism.

It belongs to the uracil-DNA glycosylase (UDG) superfamily. UNG family.

It localises to the cytoplasm. It carries out the reaction Hydrolyzes single-stranded DNA or mismatched double-stranded DNA and polynucleotides, releasing free uracil.. Excises uracil residues from the DNA which can arise as a result of misincorporation of dUMP residues by DNA polymerase or due to deamination of cytosine. This is Uracil-DNA glycosylase from Francisella tularensis subsp. holarctica (strain FTNF002-00 / FTA).